We begin with the raw amino-acid sequence, 260 residues long: NAD kinase (260 aa).

The active-site Proton acceptor is Asp49. Residues 49-50 (DG), 119-120 (NE), Asp149, Ala157, and 160-165 (TAYNLS) contribute to the NAD(+) site.

Belongs to the NAD kinase family. The cofactor is a divalent metal cation.

The protein resides in the cytoplasm. The catalysed reaction is NAD(+) + ATP = ADP + NADP(+) + H(+). Functionally, involved in the regulation of the intracellular balance of NAD and NADP, and is a key enzyme in the biosynthesis of NADP. Catalyzes specifically the phosphorylation on 2'-hydroxyl of the adenosine moiety of NAD to yield NADP. The protein is NAD kinase of Caulobacter vibrioides (strain ATCC 19089 / CIP 103742 / CB 15) (Caulobacter crescentus).